The sequence spans 190 residues: Superoxide dismutase [Fe] (190 aa).

Residues H27, H75, D156, and H160 each contribute to the Fe cation site.

Belongs to the iron/manganese superoxide dismutase family. In terms of assembly, homodimer. The cofactor is Fe cation.

It catalyses the reaction 2 superoxide + 2 H(+) = H2O2 + O2. Functionally, destroys superoxide anion radicals which are normally produced within the cells and which are toxic to biological systems. The sequence is that of Superoxide dismutase [Fe] (SODB) from Entamoeba histolytica (strain ATCC 30459 / HM-1:IMSS / ABRM).